The primary structure comprises 43 residues: Cytin chain A (43 aa).

This sequence belongs to the protease inhibitor I13 (potato type I serine protease inhibitor) family. As to quaternary structure, heterodimer of an A chain and a B chain, linked by a disulfide bond.

Functionally, inhibitor of chymotrypsin. The sequence is that of Cytin chain A from Theromyzon tessulatum (Duck leech).